A 93-amino-acid polypeptide reads, in one-letter code: UPF0175 protein AF_0100 (93 aa).

The protein belongs to the UPF0175 family.

The sequence is that of UPF0175 protein AF_0100 from Archaeoglobus fulgidus (strain ATCC 49558 / DSM 4304 / JCM 9628 / NBRC 100126 / VC-16).